We begin with the raw amino-acid sequence, 270 residues long: Formamidopyrimidine-DNA glycosylase (270 aa).

Catalysis depends on proline 2, which acts as the Schiff-base intermediate with DNA. Glutamate 3 (proton donor) is an active-site residue. The Proton donor; for beta-elimination activity role is filled by lysine 58. DNA is bound by residues histidine 91, arginine 109, and arginine 151. The segment at 236-270 (QVYGKTGQQCPSCETPLKAVKLAARASVYCPECQS) adopts an FPG-type zinc-finger fold. The active-site Proton donor; for delta-elimination activity is arginine 260.

The protein belongs to the FPG family. In terms of assembly, monomer. The cofactor is Zn(2+).

It carries out the reaction Hydrolysis of DNA containing ring-opened 7-methylguanine residues, releasing 2,6-diamino-4-hydroxy-5-(N-methyl)formamidopyrimidine.. The catalysed reaction is 2'-deoxyribonucleotide-(2'-deoxyribose 5'-phosphate)-2'-deoxyribonucleotide-DNA = a 3'-end 2'-deoxyribonucleotide-(2,3-dehydro-2,3-deoxyribose 5'-phosphate)-DNA + a 5'-end 5'-phospho-2'-deoxyribonucleoside-DNA + H(+). Functionally, involved in base excision repair of DNA damaged by oxidation or by mutagenic agents. Acts as a DNA glycosylase that recognizes and removes damaged bases. Has a preference for oxidized purines, such as 7,8-dihydro-8-oxoguanine (8-oxoG). Has AP (apurinic/apyrimidinic) lyase activity and introduces nicks in the DNA strand. Cleaves the DNA backbone by beta-delta elimination to generate a single-strand break at the site of the removed base with both 3'- and 5'-phosphates. This chain is Formamidopyrimidine-DNA glycosylase, found in Psychromonas ingrahamii (strain DSM 17664 / CCUG 51855 / 37).